The chain runs to 474 residues: Nucleobindin-1 (474 aa).

The first 24 residues, 1–24 (MPPSGPRAALFLLPSLLLLRAVLA), serve as a signal peptide directing secretion. Ser83 is modified (phosphoserine). Thr145 carries the phosphothreonine modification. Residues 147-215 (EARDLELLIQ…QQRRHREHPK (69 aa)) adopt a coiled-coil conformation. The segment covering 190-207 (SLGEEQRKEAERKLEEQQ) has biased composition (basic and acidic residues). The segment at 190-218 (SLGEEQRKEAERKLEEQQRRHREHPKVNV) is disordered. A binds to GNAI2 and GNAI3 region spans residues 225 to 318 (LKEVWEELDG…VTLEEFLAST (94 aa)). EF-hand domains lie at 237–272 (PNRF…ELEK) and 289–324 (ERLR…KEFG). Ca(2+) contacts are provided by Asp250, Asn252, Asp254, Glu261, Asp302, Asn304, Asp306, and Glu313. Positions 300–330 (NVDTNQDRLVTLEEFLASTQRKEFGDTGEGW) match the GBA motif. Positions 355–422 (AYTEEELRRF…RKQQQQSHNN (68 aa)) form a coiled coil. The disordered stretch occupies residues 382 to 474 (LSQETEALGR…EPPQLDSQHL (93 aa)). Ser383 is subject to Phosphoserine. The segment covering 448–460 (DQKDVDASEKKVP) has biased composition (basic and acidic residues). Ser471 is modified (phosphoserine).

Belongs to the nucleobindin family. As to quaternary structure, interacts (via GBA motif) with guanine nucleotide-binding protein G(i) alpha subunits GNAI1, GNAI2 and GNAI3 with higher affinity for GNAI1 and GNAI3 than for GNAI2. Preferentially interacts with inactive rather than active GNAI3. Interaction with GNAI3 is inhibited when NUCB1 binds calcium, probably due to a conformational change which renders the GBA motif inaccessible. As to expression, expressed in bone where it is detected in the soft tissue in the center of the osteon and in the osteocyte lacuna (at protein level).

It is found in the golgi apparatus. The protein localises to the cis-Golgi network membrane. Its subcellular location is the cytoplasm. The protein resides in the secreted. Major calcium-binding protein of the Golgi which may have a role in calcium homeostasis. Acts as a non-receptor guanine nucleotide exchange factor which binds to and activates alpha subunits of guanine nucleotide-binding proteins (G proteins). The chain is Nucleobindin-1 (NUCB1) from Bos taurus (Bovine).